The primary structure comprises 107 residues: UPF0145 protein Spro_1658 (107 aa).

The protein belongs to the UPF0145 family.

The polypeptide is UPF0145 protein Spro_1658 (Serratia proteamaculans (strain 568)).